Here is a 469-residue protein sequence, read N- to C-terminus: MAQTLYDKLWNSHVVHTEEDGTALLYIDRQLLHEVTSPQAFEGLKLAQRPVWRISANLAVSDHNVPTTDRSHGIADPVSKLQVDTLDANCDAYGITQFKMNDVRQGIVHIIGPEQGATLPGMTIVCGDSHTSTHGAFGALAHGIGTSEVEHVLATQTLLQKKSKNMLVKVEGQLPRGCTAKDIVLAIIGKIGTAGGTGYAIEFGGSTIRALTMEGRMTVCNMAIEAGARAGMVAVDDTTVEYLKGRPFVPTGAQWDQAVEYWKTFKSDEGAQFDRVVELNAAEIVPQVTWGTSPEMVTSIDGRVPDPEREKDPVKRDAMERALAYMALTPNTPIEAIKVDKIFIGSCTNARIEDIRAAAYVVKKLNRRVAPNVRLAMVVPGSGLVKAQAEREGLDKVFTEAGFEWREPGCSMCLAMNADRLEPGERCASTSNRNFEGRQGQGGRTHLVSPAMAAAAAIEGHFVDIRRLG.

Cys-347, Cys-410, and Cys-413 together coordinate [4Fe-4S] cluster.

This sequence belongs to the aconitase/IPM isomerase family. LeuC type 1 subfamily. In terms of assembly, heterodimer of LeuC and LeuD. [4Fe-4S] cluster is required as a cofactor.

It catalyses the reaction (2R,3S)-3-isopropylmalate = (2S)-2-isopropylmalate. The protein operates within amino-acid biosynthesis; L-leucine biosynthesis; L-leucine from 3-methyl-2-oxobutanoate: step 2/4. Functionally, catalyzes the isomerization between 2-isopropylmalate and 3-isopropylmalate, via the formation of 2-isopropylmaleate. The sequence is that of 3-isopropylmalate dehydratase large subunit from Burkholderia thailandensis (strain ATCC 700388 / DSM 13276 / CCUG 48851 / CIP 106301 / E264).